We begin with the raw amino-acid sequence, 248 residues long: 1-(5-phosphoribosyl)-5-[(5-phosphoribosylamino)methylideneamino] imidazole-4-carboxamide isomerase (248 aa).

Residue D8 is the Proton acceptor of the active site. The active-site Proton donor is D131.

Belongs to the HisA/HisF family.

The protein localises to the cytoplasm. It carries out the reaction 1-(5-phospho-beta-D-ribosyl)-5-[(5-phospho-beta-D-ribosylamino)methylideneamino]imidazole-4-carboxamide = 5-[(5-phospho-1-deoxy-D-ribulos-1-ylimino)methylamino]-1-(5-phospho-beta-D-ribosyl)imidazole-4-carboxamide. The protein operates within amino-acid biosynthesis; L-histidine biosynthesis; L-histidine from 5-phospho-alpha-D-ribose 1-diphosphate: step 4/9. The sequence is that of 1-(5-phosphoribosyl)-5-[(5-phosphoribosylamino)methylideneamino] imidazole-4-carboxamide isomerase from Nitrosomonas eutropha (strain DSM 101675 / C91 / Nm57).